A 458-amino-acid chain; its full sequence is Maturase-like protein 1 (458 aa).

The protein to group II intron maturases.

Its subcellular location is the plastid. It localises to the chloroplast. In terms of biological role, could be required for group III intron excision. This chain is Maturase-like protein 1 (mat1), found in Euglena gracilis.